The following is a 241-amino-acid chain: Endodeoxyribonuclease NucC (241 aa).

Residues D73, E104, and K106 contribute to the active site. Positions 73 and 104 each coordinate Mg(2+).

This sequence belongs to the NucC endonuclease family. Self-oligomerizes. Forms homotrimers; in the presence of cAAA the trimers associate face-to-face to form homohexamers. The 2 cAAA-binding sites are on the exterior of the hexamer at the three-way junction, there are maximally 2 cyclic nucleotides per hexamer. Requires Mg(2+) as cofactor.

Its activity is regulated as follows. Activated by cAAA and to a lesser extent cAA; both cyclic nucleotides are products of its cognate CD-NTase. Cyclic nucleotide binding causes hexamerization. Its function is as follows. Effector DNase of a CBASS antivirus system. CBASS (cyclic oligonucleotide-based antiphage signaling system) provides immunity against bacteriophage. The CD-NTase protein synthesizes cyclic nucleotides in response to infection; these serve as specific second messenger signals. The signals activate a diverse range of effectors, leading to bacterial cell death and thus abortive phage infection. A type III-C(AAA) CBASS system. A cyclic nucleotide-activated dsDNase. In the presence of 3',3',3'-cyclic AMP-AMP-AMP (cAAA) and to a lesser extent cyclic-di-AMP (c-di-AMP), endonucleolytically degrades dsDNA. Binds one cAAA in a pocket on one surface of the trimer; cAAA binding promotes hexamerization which is probably necessary for nuclease activation. The nuclease digests dsDNA to about 50 bp lengths. DNA has been modeled to contact a pair of juxtaposed active sites (one from each layer of the hexamer), accounting for cleavage on both strands. The sequence is that of Endodeoxyribonuclease NucC from Pseudomonas aeruginosa.